We begin with the raw amino-acid sequence, 2253 residues long: Protein Ycf2 (2253 aa).

Residue 1600–1607 (GFIGTGRS) coordinates ATP.

This sequence belongs to the Ycf2 family.

It is found in the plastid. The protein localises to the chloroplast stroma. Its function is as follows. Probable ATPase of unknown function. Its presence in a non-photosynthetic plant (Epifagus virginiana) and experiments in tobacco indicate that it has an essential function which is probably not related to photosynthesis. The chain is Protein Ycf2 from Nymphaea alba (White water-lily).